Consider the following 453-residue polypeptide: ATP-dependent protease ATPase subunit HslU (453 aa).

Residues I18, 60–65 (GVGKTE), D266, E331, and R403 contribute to the ATP site.

This sequence belongs to the ClpX chaperone family. HslU subfamily. A double ring-shaped homohexamer of HslV is capped on each side by a ring-shaped HslU homohexamer. The assembly of the HslU/HslV complex is dependent on binding of ATP.

The protein localises to the cytoplasm. In terms of biological role, ATPase subunit of a proteasome-like degradation complex; this subunit has chaperone activity. The binding of ATP and its subsequent hydrolysis by HslU are essential for unfolding of protein substrates subsequently hydrolyzed by HslV. HslU recognizes the N-terminal part of its protein substrates and unfolds these before they are guided to HslV for hydrolysis. This Desulforapulum autotrophicum (strain ATCC 43914 / DSM 3382 / VKM B-1955 / HRM2) (Desulfobacterium autotrophicum) protein is ATP-dependent protease ATPase subunit HslU.